Here is a 305-residue protein sequence, read N- to C-terminus: Methionyl-tRNA formyltransferase (305 aa).

Residue 111 to 114 (SILP) participates in (6S)-5,6,7,8-tetrahydrofolate binding.

This sequence belongs to the Fmt family.

It catalyses the reaction L-methionyl-tRNA(fMet) + (6R)-10-formyltetrahydrofolate = N-formyl-L-methionyl-tRNA(fMet) + (6S)-5,6,7,8-tetrahydrofolate + H(+). Its function is as follows. Attaches a formyl group to the free amino group of methionyl-tRNA(fMet). The formyl group appears to play a dual role in the initiator identity of N-formylmethionyl-tRNA by promoting its recognition by IF2 and preventing the misappropriation of this tRNA by the elongation apparatus. This chain is Methionyl-tRNA formyltransferase, found in Wolinella succinogenes (strain ATCC 29543 / DSM 1740 / CCUG 13145 / JCM 31913 / LMG 7466 / NCTC 11488 / FDC 602W) (Vibrio succinogenes).